The sequence spans 195 residues: Endoribonuclease YbeY (195 aa).

Zn(2+) contacts are provided by His-152, His-156, and His-162.

The protein belongs to the endoribonuclease YbeY family. The cofactor is Zn(2+).

Its subcellular location is the cytoplasm. In terms of biological role, single strand-specific metallo-endoribonuclease involved in late-stage 70S ribosome quality control and in maturation of the 3' terminus of the 16S rRNA. In Rhodopseudomonas palustris (strain HaA2), this protein is Endoribonuclease YbeY.